The chain runs to 311 residues: tRNA N6-adenosine threonylcarbamoyltransferase (311 aa).

Fe cation contacts are provided by H108 and H112. Substrate is bound by residues 130–134 (LVSGG), D163, G176, D180, and N270. Residue D294 coordinates Fe cation.

Belongs to the KAE1 / TsaD family. Fe(2+) serves as cofactor.

The protein localises to the cytoplasm. It catalyses the reaction L-threonylcarbamoyladenylate + adenosine(37) in tRNA = N(6)-L-threonylcarbamoyladenosine(37) in tRNA + AMP + H(+). Functionally, required for the formation of a threonylcarbamoyl group on adenosine at position 37 (t(6)A37) in tRNAs that read codons beginning with adenine. Is involved in the transfer of the threonylcarbamoyl moiety of threonylcarbamoyl-AMP (TC-AMP) to the N6 group of A37, together with TsaE and TsaB. TsaD likely plays a direct catalytic role in this reaction. This chain is tRNA N6-adenosine threonylcarbamoyltransferase, found in Metamycoplasma arthritidis (strain 158L3-1) (Mycoplasma arthritidis).